The sequence spans 309 residues: Cell division protein FtsQ (309 aa).

Residues 1–52 (MLALRGRRGKRVRYPADGVAEADEAFVLPRPLRRGVRFLISLGAGRIRFPNH) lie on the Cytoplasmic side of the membrane. The helical transmembrane segment at 53-74 (TGTVAAAAFMVATGLYGMSLGG) threads the bilayer. The Periplasmic portion of the chain corresponds to 75–309 (HTQSFAQVST…KMLKAQEKRI (235 aa)). Residues 89–157 (FAIEDVRVSG…GTIEVVLKER (69 aa)) enclose the POTRA domain.

It belongs to the FtsQ/DivIB family. FtsQ subfamily.

Its subcellular location is the cell inner membrane. Essential cell division protein. This is Cell division protein FtsQ from Rhizobium meliloti (strain 1021) (Ensifer meliloti).